We begin with the raw amino-acid sequence, 221 residues long: Ras-related protein Rab-27A (221 aa).

Residue Ser2 is modified to N-acetylserine. At Ser2 the chain carries Phosphoserine. Residue 16–24 (GDSGVGKTS) participates in GTP binding. Residues 38–46 (FITTVGIDF) carry the Effector region motif. GTP contacts are provided by residues 74–78 (DTAGQ), 133–136 (NKSD), and 163–165 (SAA). A disulfide bridge links Cys123 with Cys188. 2 S-geranylgeranyl cysteine lipidation sites follow: Cys219 and Cys221. A Cysteine methyl ester modification is found at Cys221.

It belongs to the small GTPase superfamily. Rab family. As to quaternary structure, binds SYTL1, SYTL2, SLAC2B, MYRIP, SYTL3, SYTL4, SYTL5 and MLPH. Interacts with UNC13D. Interacts with RPH3A and RPH3A. Does not interact with the BLOC-3 complex (heterodimer of HPS1 and HPS4). Interacts (GDP-bound form preferentially) with DENND10. Detected in melanocytes. Expressed abundantly in the stomach and is predominantly localized at the apical region of gastric-surface mucus cells. Also expressed in the thymus and lung.

It is found in the membrane. The protein resides in the melanosome. Its subcellular location is the late endosome. It localises to the lysosome. It carries out the reaction GTP + H2O = GDP + phosphate + H(+). Regulated by guanine nucleotide exchange factors (GEFs) which promote the exchange of bound GDP for free GTP, GTPase activating proteins (GAPs) which increase the GTP hydrolysis activity, and GDP dissociation inhibitors which inhibit the dissociation of the nucleotide from the GTPase. Activated by GEFs such as DENND10. Its function is as follows. Small GTPase which cycles between active GTP-bound and inactive GDP-bound states. In its active state, binds to a variety of effector proteins to regulate homeostasis of late endocytic pathway, including endosomal positioning, maturation and secretion. Plays a role in cytotoxic granule exocytosis in lymphocytes. Required for both granule maturation and granule docking and priming at the immunologic synapse. This chain is Ras-related protein Rab-27A (Rab27a), found in Mus musculus (Mouse).